A 434-amino-acid polypeptide reads, in one-letter code: Nuclear distribution protein PAC1 (434 aa).

Positions 8-40 (QKDDLHKAMLDYLYANNHTAAFNALKESAGITY) constitute a LisH domain. A coiled-coil region spans residues 57–83 (TSVIRLQKKIMELENRNAALQEELSMS). WD repeat units follow at residues 106–147 (GHRA…RTLK), 149–187 (HTKPVNDLDFDHKGHLLVTCSSDLFIKIWDSQNEWKNTK), 191–230 (GHDHAVSAVRFMPGDQLIVSASRDRTIRVFDVASTHQVRT), 233–272 (GHSEWVRCVIPSADGTMLASGSKDQTVRLWDPLTGEPKSE), 275–334 (GHEN…MIRN), 337–378 (GHDN…RIVE), and 401–434 (KKVNGVDSVDAEPEKVVNVVATGSVDETIKIWLP).

The protein belongs to the WD repeat LIS1/nudF family. In terms of assembly, self-associates. Interacts with NDL1 and dynein.

The protein resides in the cytoplasm. Its subcellular location is the cytoskeleton. It is found in the spindle pole. In terms of biological role, positively regulates the activity of the minus-end directed microtubule motor protein dynein. May enhance dynein-mediated microtubule sliding by targeting dynein to the microtubule plus end. Required for nuclear migration during vegetative growth as well as development. Required for retrograde early endosome (EE) transport from the hyphal tip. Required for localization of dynein to the mitotic spindle poles. Recruits additional proteins to the dynein complex at SPBs. The polypeptide is Nuclear distribution protein PAC1 (Coprinopsis cinerea (strain Okayama-7 / 130 / ATCC MYA-4618 / FGSC 9003) (Inky cap fungus)).